The following is a 255-amino-acid chain: Imidazole glycerol phosphate synthase subunit HisF (255 aa).

Active-site residues include D13 and D132.

This sequence belongs to the HisA/HisF family. In terms of assembly, heterodimer of HisH and HisF.

It is found in the cytoplasm. It catalyses the reaction 5-[(5-phospho-1-deoxy-D-ribulos-1-ylimino)methylamino]-1-(5-phospho-beta-D-ribosyl)imidazole-4-carboxamide + L-glutamine = D-erythro-1-(imidazol-4-yl)glycerol 3-phosphate + 5-amino-1-(5-phospho-beta-D-ribosyl)imidazole-4-carboxamide + L-glutamate + H(+). The protein operates within amino-acid biosynthesis; L-histidine biosynthesis; L-histidine from 5-phospho-alpha-D-ribose 1-diphosphate: step 5/9. Functionally, IGPS catalyzes the conversion of PRFAR and glutamine to IGP, AICAR and glutamate. The HisF subunit catalyzes the cyclization activity that produces IGP and AICAR from PRFAR using the ammonia provided by the HisH subunit. This Leptospira biflexa serovar Patoc (strain Patoc 1 / ATCC 23582 / Paris) protein is Imidazole glycerol phosphate synthase subunit HisF.